The primary structure comprises 175 residues: Sec-independent protein translocase protein TatB (175 aa).

Residues 1–21 form a helical membrane-spanning segment; that stretch reads MLDLGLSKMALIGVVALVVLG. The span at 96–115 shows a compositional bias: low complexity; the sequence is VSPGGSAAADAPDGPSAASG. 2 disordered regions span residues 96-119 and 152-175; these read VSPG…EPSW and QVQS…ARFL. The span at 160–175 shows a compositional bias: basic residues; the sequence is VARHRPASLRRPARFL.

The protein belongs to the TatB family. As to quaternary structure, the Tat system comprises two distinct complexes: a TatABC complex, containing multiple copies of TatA, TatB and TatC subunits, and a separate TatA complex, containing only TatA subunits. Substrates initially bind to the TatABC complex, which probably triggers association of the separate TatA complex to form the active translocon.

The protein localises to the cell inner membrane. Functionally, part of the twin-arginine translocation (Tat) system that transports large folded proteins containing a characteristic twin-arginine motif in their signal peptide across membranes. Together with TatC, TatB is part of a receptor directly interacting with Tat signal peptides. TatB may form an oligomeric binding site that transiently accommodates folded Tat precursor proteins before their translocation. The protein is Sec-independent protein translocase protein TatB of Burkholderia pseudomallei (strain 1710b).